Consider the following 93-residue polypeptide: Acylphosphatase (93 aa).

Residues 6–93 enclose the Acylphosphatase-like domain; sequence RAIVTVKGLV…GEFDTFDVRY (88 aa). Catalysis depends on residues Arg-21 and Asn-39.

The protein belongs to the acylphosphatase family.

It carries out the reaction an acyl phosphate + H2O = a carboxylate + phosphate + H(+). The protein is Acylphosphatase (acyP) of Geobacter metallireducens (strain ATCC 53774 / DSM 7210 / GS-15).